We begin with the raw amino-acid sequence, 230 residues long: Large ribosomal subunit protein uL1 (230 aa).

It belongs to the universal ribosomal protein uL1 family. In terms of assembly, part of the 50S ribosomal subunit.

In terms of biological role, binds directly to 23S rRNA. The L1 stalk is quite mobile in the ribosome, and is involved in E site tRNA release. Functionally, protein L1 is also a translational repressor protein, it controls the translation of the L11 operon by binding to its mRNA. The sequence is that of Large ribosomal subunit protein uL1 from Leptospira biflexa serovar Patoc (strain Patoc 1 / Ames).